Reading from the N-terminus, the 50-residue chain is Defensin D4 (50 aa).

Cystine bridges form between cysteine 3–cysteine 50, cysteine 14–cysteine 35, cysteine 20–cysteine 44, and cysteine 24–cysteine 46.

As to expression, detected in seeds (at protein level).

It is found in the secreted. In terms of biological role, antimicrobial peptide with antifungal activity. This is Defensin D4 from Nigella sativa (Black cumin).